We begin with the raw amino-acid sequence, 70 residues long: Kappa-conotoxin-like Sx11.2 (70 aa).

The signal sequence occupies residues Met-1–Ala-26. 4 cysteine pairs are disulfide-bonded: Cys-27–Cys-41, Cys-34–Cys-46, Cys-40–Cys-50, and Cys-45–Cys-54. 3 positions are modified to 4-carboxyglutamate: Glu-30, Glu-35, and Glu-44. Pro-53 is subject to 4-hydroxyproline. A Proline amide modification is found at Pro-57. A propeptide spanning residues Ser-61–Arg-70 is cleaved from the precursor.

This sequence belongs to the conotoxin I2 superfamily. Expressed by the venom duct.

It localises to the secreted. Its function is as follows. Modulator of potassium channels, specifically up-modulates the calcium and voltage-gated BK channels, has no effect on single channel conductance, but increases the open probability of BK channels. This is Kappa-conotoxin-like Sx11.2 from Conus striolatus (Cone snail).